A 366-amino-acid chain; its full sequence is MSGNTLGTLFTVTTFGESHGPAIGCVIDGCPPGMGLTEADIQIELDRRKPGTSRHVTQRQEADEVEILSGVFEGVTTGTPIALLIRNTDQRSKDYGNIVETFRPGHADYTYWQKYGIRDYRGGGRSSARLTAPIVGAGAVAKKWLRERFGVEVRGYMSGLGEIDVPFVDWSHVHENPFFSPNAAVVPELEAYMDALRKDGDSIGARIDVVASGVPVGWGEPVFDRLDADIAKAMMSINAVKGVEIGAGFDSVAQRGSVHGDELTPAGFVGNHAGGVLGGISTGQDITVSIAIKPTSSIRTPRRSITKSGDEATVETFGRHDPCVGIRATPIAESMLALVLIDHALRHRAQCGDVETSTPKIAGSAT.

2 residues coordinate NADP(+): Arg48 and Arg54. Residues 125–127, 238–239, Gly278, 293–297, and Arg319 contribute to the FMN site; these read RSS, NA, and KPTSS.

It belongs to the chorismate synthase family. Homotetramer. FMNH2 is required as a cofactor.

It carries out the reaction 5-O-(1-carboxyvinyl)-3-phosphoshikimate = chorismate + phosphate. The protein operates within metabolic intermediate biosynthesis; chorismate biosynthesis; chorismate from D-erythrose 4-phosphate and phosphoenolpyruvate: step 7/7. Catalyzes the anti-1,4-elimination of the C-3 phosphate and the C-6 proR hydrogen from 5-enolpyruvylshikimate-3-phosphate (EPSP) to yield chorismate, which is the branch point compound that serves as the starting substrate for the three terminal pathways of aromatic amino acid biosynthesis. This reaction introduces a second double bond into the aromatic ring system. The chain is Chorismate synthase from Burkholderia cenocepacia (strain HI2424).